Consider the following 100-residue polypeptide: Small ribosomal subunit protein uS14c (100 aa).

This sequence belongs to the universal ribosomal protein uS14 family. As to quaternary structure, part of the 30S ribosomal subunit.

Its subcellular location is the plastid. The protein localises to the chloroplast. Functionally, binds 16S rRNA, required for the assembly of 30S particles. In Chlamydomonas reinhardtii (Chlamydomonas smithii), this protein is Small ribosomal subunit protein uS14c.